A 74-amino-acid chain; its full sequence is Consomatin Ma1 (74 aa).

The first 22 residues, 1 to 22 (MQTAYWVMVMMMVWITAPLSEG), serve as a signal peptide directing secretion. Residues 23 to 57 (GKLNGEIRGLVSHILIPQHTLRSLTSRDRSDNGGS) constitute a propeptide that is removed on maturation. The cysteines at positions 63 and 68 are disulfide-linked. A D-tryptophan modification is found at Trp-65. 4-hydroxyproline is present on residues Pro-69, Pro-70, and Pro-72.

The protein belongs to the conotoxin C superfamily. Consomatin family. As to expression, expressed by the venom duct.

It is found in the secreted. Moderately activates human somatostatin receptors (SSTR) with a preferential activation of SSTR1 and SSTR4. In vivo, does not cause behavioral changes in mice within a few minutes of intracranial injection, but causes a progressive loss of movement thereafter. Four to five hours after injection, mice recover, even with the highest dose tested. Shows antinociception and antihyperalgesia activities in two mouse models of acute pain, most probably by acting outside the central nervous system. The sequence is that of Consomatin Ma1 from Conus magus (Magical cone).